A 415-amino-acid chain; its full sequence is Serine hydroxymethyltransferase (415 aa).

(6S)-5,6,7,8-tetrahydrofolate is bound by residues L121 and 125–127; that span reads GHL. K229 is subject to N6-(pyridoxal phosphate)lysine. (6S)-5,6,7,8-tetrahydrofolate is bound at residue 352 to 354; sequence TPF.

This sequence belongs to the SHMT family. In terms of assembly, homodimer. Pyridoxal 5'-phosphate serves as cofactor.

The protein localises to the cytoplasm. It carries out the reaction (6R)-5,10-methylene-5,6,7,8-tetrahydrofolate + glycine + H2O = (6S)-5,6,7,8-tetrahydrofolate + L-serine. The protein operates within one-carbon metabolism; tetrahydrofolate interconversion. It functions in the pathway amino-acid biosynthesis; glycine biosynthesis; glycine from L-serine: step 1/1. Functionally, catalyzes the reversible interconversion of serine and glycine with tetrahydrofolate (THF) serving as the one-carbon carrier. This reaction serves as the major source of one-carbon groups required for the biosynthesis of purines, thymidylate, methionine, and other important biomolecules. Also exhibits THF-independent aldolase activity toward beta-hydroxyamino acids, producing glycine and aldehydes, via a retro-aldol mechanism. This is Serine hydroxymethyltransferase from Chromobacterium violaceum (strain ATCC 12472 / DSM 30191 / JCM 1249 / CCUG 213 / NBRC 12614 / NCIMB 9131 / NCTC 9757 / MK).